A 225-amino-acid chain; its full sequence is Claudin-17 (225 aa).

Residues 1–7 (MAFYPLQ) are Cytoplasmic-facing. Residues 8–28 (IAGLVLGFLGMVGTLATTLLP) traverse the membrane as a helical segment. Residues 29–81 (QWRVSAFIGSNIIVFERIWEGLWMNCVRQAKARLQCKFYSSMLALSPALEAAR) lie on the Extracellular side of the membrane. Residues 82 to 102 (ALMCVAVALSLIALIIGICGM) form a helical membrane-spanning segment. Topologically, residues 103–124 (KKIQCTGSNERAKAYLLGTSGV) are cytoplasmic. Residues 125 to 145 (LFILTGIFVLIPVCWTANIII) traverse the membrane as a helical segment. At 146–164 (RDFYNPAVHVGQKRELGAA) the chain is on the extracellular side. A helical transmembrane segment spans residues 165-185 (LFLGWASVAVLFIAGGLLCGF). Topologically, residues 186–225 (CCCNRKKQRDGYPAPRPSMPRTDERRRNMTRQSETPTSYV) are cytoplasmic. The interval 194–225 (RDGYPAPRPSMPRTDERRRNMTRQSETPTSYV) is disordered. Residues 215 to 225 (TRQSETPTSYV) show a composition bias toward polar residues.

This sequence belongs to the claudin family. As to quaternary structure, does not form homotypic polymeric strands and it is not sufficient to form tight junctions by its own. Interacts with OCLN.

The protein resides in the cell junction. The protein localises to the tight junction. Its subcellular location is the cell membrane. It catalyses the reaction chloride(in) = chloride(out). It carries out the reaction hydrogencarbonate(in) = hydrogencarbonate(out). The enzyme catalyses bromide(in) = bromide(out). The catalysed reaction is iodide(out) = iodide(in). It catalyses the reaction fluoride(in) = fluoride(out). It carries out the reaction nitrate(in) = nitrate(out). The enzyme catalyses thiocyanate(in) = thiocyanate(out). Its function is as follows. Channel-forming tight junction protein with selectivity for anions, including chloride and hydrogencarbonate, and for solutes smaller than 9 Angstrom in diameter. In the kidney proximal tubule, may be involved in quantitative reabsorption of filtered anions. Does not affect water permeability. The sequence is that of Claudin-17 (CLDN17) from Sus scrofa (Pig).